Consider the following 653-residue polypeptide: Modification methylase StsI (653 aa).

This sequence belongs to the N(4)/N(6)-methyltransferase family. As to quaternary structure, monomer.

The catalysed reaction is a 2'-deoxyadenosine in DNA + S-adenosyl-L-methionine = an N(6)-methyl-2'-deoxyadenosine in DNA + S-adenosyl-L-homocysteine + H(+). In terms of biological role, an alpha subtype methylase that recognizes the double-stranded sequence 5'-GGATG-3' in one strand and 3'-CATCC-5' in the other, methylates A of both strands, and protects the DNA from cleavage by the StsI endonuclease. The 2 domains of the protein participate in modification of the two strands. The protein is Modification methylase StsI (stsIM) of Streptococcus sanguinis.